Consider the following 441-residue polypeptide: Peroxisome proliferator-activated receptor delta (441 aa).

A disordered region spans residues 1-58 (MEQPPGEAAEVREEEEKKEVAEAEGAPELNGGPERSLPSSSYTDLSRSSSPPSLLDQL). A compositionally biased stretch (basic and acidic residues) spans 9–21 (AEVREEEEKKEVA). Residues 36 to 55 (SLPSSSYTDLSRSSSPPSLL) are compositionally biased toward low complexity. The segment at residues 70-145 (LNMECRVCGD…LGMSHNAIRF (76 aa)) is a DNA-binding region (nuclear receptor). 2 consecutive NR C4-type zinc fingers follow at residues 74 to 94 (CRVC…CEGC) and 111 to 133 (CERI…FQKC). Residues 211–439 (FVIHDIETLW…HPLLQEIYKD (229 aa)) enclose the NR LBD domain.

Belongs to the nuclear hormone receptor family. NR1 subfamily. In terms of assembly, heterodimer with the retinoid X receptor. Interacts (via domain NR LBD) with CRY1 and CRY2 in a ligand-dependent manner. 'Lys-48'-linked polyubiquitinated; leading to proteasomal degradation. Deubiquitinated and stabilized by OTUD3.

The protein localises to the nucleus. Its function is as follows. Ligand-activated transcription factor key mediator of energy metabolism in adipose tissues. Receptor that binds peroxisome proliferators such as hypolipidemic drugs and fatty acids. Has a preference for poly-unsaturated fatty acids, such as gamma-linoleic acid and eicosapentanoic acid. Once activated by a ligand, the receptor binds to promoter elements of target genes. Regulates the peroxisomal beta-oxidation pathway of fatty acids. Functions as a transcription activator for the acyl-CoA oxidase gene. Decreases expression of NPC1L1 once activated by a ligand. The sequence is that of Peroxisome proliferator-activated receptor delta (PPARD) from Canis lupus familiaris (Dog).